The chain runs to 134 residues: DNA-directed RNA polymerase subunit omega (134 aa).

It belongs to the RNA polymerase subunit omega family. As to quaternary structure, the RNAP catalytic core consists of 2 alpha, 1 beta, 1 beta' and 1 omega subunit. When a sigma factor is associated with the core the holoenzyme is formed, which can initiate transcription.

It catalyses the reaction RNA(n) + a ribonucleoside 5'-triphosphate = RNA(n+1) + diphosphate. Its function is as follows. Promotes RNA polymerase assembly. Latches the N- and C-terminal regions of the beta' subunit thereby facilitating its interaction with the beta and alpha subunits. This chain is DNA-directed RNA polymerase subunit omega, found in Rhizobium johnstonii (strain DSM 114642 / LMG 32736 / 3841) (Rhizobium leguminosarum bv. viciae).